The following is a 146-amino-acid chain: Putative trafficking protein particle complex subunit TRS31 (146 aa).

This sequence belongs to the TRAPP small subunits family. BET3 subfamily. As to quaternary structure, part of the multisubunit TRAPP (transport protein particle) complex.

The protein localises to the golgi apparatus. It localises to the cis-Golgi network. It is found in the endoplasmic reticulum. In terms of biological role, may play a role in vesicular transport from endoplasmic reticulum to Golgi. The sequence is that of Putative trafficking protein particle complex subunit TRS31 (TRS31) from Encephalitozoon cuniculi (strain GB-M1) (Microsporidian parasite).